Consider the following 289-residue polypeptide: Nucleotide-binding protein MS1718 (289 aa).

8-15 (GRSGAGKS) is a binding site for ATP. 56–59 (DIRN) contacts GTP.

Belongs to the RapZ-like family.

Displays ATPase and GTPase activities. The chain is Nucleotide-binding protein MS1718 from Mannheimia succiniciproducens (strain KCTC 0769BP / MBEL55E).